Consider the following 586-residue polypeptide: Clathrin heavy chain linker domain-containing protein 1 (586 aa).

A coiled-coil region spans residues 174–232 (MNLDALTKYMKHLEDKYAEIKQAMLIKYVPAQRKSDLDEEMIVLLKRRDVAENLNRKLQ).

This chain is Clathrin heavy chain linker domain-containing protein 1 (CLHC1), found in Macaca fascicularis (Crab-eating macaque).